The chain runs to 258 residues: Phosphate import ATP-binding protein PstB (258 aa).

The ABC transporter domain occupies 5–247; it reads LDLKGVNIYY…EKIFSNPTEK (243 aa). 37-44 lines the ATP pocket; it reads GASGCGKT.

Belongs to the ABC transporter superfamily. Phosphate importer (TC 3.A.1.7) family. The complex is composed of two ATP-binding proteins (PstB), two transmembrane proteins (PstC and PstA) and a solute-binding protein (PstS).

Its subcellular location is the cell membrane. It carries out the reaction phosphate(out) + ATP + H2O = ADP + 2 phosphate(in) + H(+). Part of the ABC transporter complex PstSACB involved in phosphate import. Responsible for energy coupling to the transport system. In Mycobacterium leprae (strain TN), this protein is Phosphate import ATP-binding protein PstB.